A 78-amino-acid chain; its full sequence is Large ribosomal subunit protein bL28 (78 aa).

The disordered stretch occupies residues 1–21 (MSRVCQVTGKKPMVGNNRSHA).

It belongs to the bacterial ribosomal protein bL28 family.

This is Large ribosomal subunit protein bL28 from Shewanella loihica (strain ATCC BAA-1088 / PV-4).